Consider the following 462-residue polypeptide: MIGNSSKDNFGQQQKLSRGLKNRHIQLMAIGGAIGTGLFLGSGKSIHFAGPSILFAYLITGVFCFFIMRSLGELLLSNAGYHSFVDFVRDYLGNMAAFITGWTYWFCWISLAMADLTAVGIYTQYWLPDVPQWLPGLLALIILLIMNLATVKLFGELEFWFALIKVIAILALIVTGILLIAKGFSAASGPASLNNLWSHGGMFPNGWHGFILSFQMVVFAFVGIELVGLTAGETENPQKVIPKAINQIPVRILLFYVGALFVIMCIYPWNVLNPNESPFVQVFSAVGIVVAASLINFVVLTSAASAANSALFSTSRMVYSLAKDHHAPGLLKKLTSSNVPSNALFFSSIAILIGVSLNYLMPEQVFTLITSVSTICFIFIWGITVICHLKYRKTRQHEAKANKFKMPFYPLSNYLTLAFLAFILVILALANDTRIALFVTPVWFVLLIILYKVQTRRGHKVK.

A run of 12 helical transmembrane segments spans residues 27–47 (LMAI…KSIH), 48–68 (FAGP…FFIM), 96–116 (AAFI…MADL), 134–154 (LPGL…VKLF), 160–180 (WFAL…ILLI), 209–229 (GFIL…LVGL), 252–272 (ILLF…WNVL), 279–299 (FVQV…NFVV), 343–363 (ALFF…LMPE), 366–386 (FTLI…ITVI), 410–430 (PLSN…LALA), and 435–455 (IALF…KVQT).

It belongs to the amino acid-polyamine-organocation (APC) superfamily.

The protein localises to the cell membrane. In terms of biological role, probable amino-acid or metabolite transport protein. The polypeptide is Amino-acid permease AapA (aapA) (Bacillus subtilis (strain 168)).